The following is a 228-amino-acid chain: uncharacterized protein (228 aa).

An ATP-binding site is contributed by 21–28 (GMIALGKT).

This is an uncharacterized protein from Mycoplasma genitalium (strain ATCC 33530 / DSM 19775 / NCTC 10195 / G37) (Mycoplasmoides genitalium).